Reading from the N-terminus, the 248-residue chain is Glutamine-binding periplasmic protein (248 aa).

Residues 1 to 22 (MKSVLKVSLAALTLAFAVSSHA) form the signal peptide.

This sequence belongs to the bacterial solute-binding protein 3 family.

The protein resides in the periplasm. Involved in a glutamine-transport system GlnHPQ. The polypeptide is Glutamine-binding periplasmic protein (glnH) (Escherichia coli O157:H7).